A 68-amino-acid chain; its full sequence is Large ribosomal subunit protein uL30 (68 aa).

This sequence belongs to the universal ribosomal protein uL30 family. As to quaternary structure, part of the 50S ribosomal subunit.

This chain is Large ribosomal subunit protein uL30, found in Bartonella quintana (strain Toulouse) (Rochalimaea quintana).